The sequence spans 205 residues: Small ribosomal subunit protein uS4 (205 aa).

Positions 19 to 45 (IWGRSKSPVNRREYGPGQHGQRRKGKL) are disordered. An S4 RNA-binding domain is found at 94 to 157 (RRLDAVVYRA…KQMALVLEAV (64 aa)).

This sequence belongs to the universal ribosomal protein uS4 family. Part of the 30S ribosomal subunit. Contacts protein S5. The interaction surface between S4 and S5 is involved in control of translational fidelity.

In terms of biological role, one of the primary rRNA binding proteins, it binds directly to 16S rRNA where it nucleates assembly of the body of the 30S subunit. With S5 and S12 plays an important role in translational accuracy. In Azorhizobium caulinodans (strain ATCC 43989 / DSM 5975 / JCM 20966 / LMG 6465 / NBRC 14845 / NCIMB 13405 / ORS 571), this protein is Small ribosomal subunit protein uS4.